The sequence spans 1485 residues: Putative E3 ubiquitin-protein ligase LIN-2 (1485 aa).

Acidic residues predominate over residues 337-353; that stretch reads EENEDDSDSELDNESVD. Disordered regions lie at residues 337–363, 384–450, and 462–507; these read EENE…IFSP, NQIP…ISNA, and RKND…KLSM. Residues 438 to 450 show a composition bias toward low complexity; the sequence is SSPDISIDNISNA. Positions 466 to 484 are enriched in polar residues; that stretch reads SQTPSMNQDNENSLVLNDS. Positions 510–585 constitute a U-box domain; sequence KPPKDFVCPI…TSWKEQNPEL (76 aa). WD repeat units follow at residues 1194-1232, 1246-1283, 1409-1448, and 1454-1485; these read SCKE…KVCD, EHTK…IKCI, SLST…RVAS, and GHTK…WALD.

The enzyme catalyses S-ubiquitinyl-[E2 ubiquitin-conjugating enzyme]-L-cysteine + [acceptor protein]-L-lysine = [E2 ubiquitin-conjugating enzyme]-L-cysteine + N(6)-ubiquitinyl-[acceptor protein]-L-lysine.. It functions in the pathway protein modification; protein ubiquitination. Putative E3 ubiquitin-protein ligase involved in the rhizobial infection process. Plays an important role in the early steps of infection thread formation and in growth and differentiation of nodules. The protein is Putative E3 ubiquitin-protein ligase LIN-2 of Lotus japonicus (Lotus corniculatus var. japonicus).